Consider the following 276-residue polypeptide: Glutamate 5-kinase (276 aa).

ATP is bound at residue Lys-14. Residues Ser-54, Asp-141, and Asn-157 each coordinate substrate. Residues 177-178 and 219-225 contribute to the ATP site; these read SD and TGGMLTK.

The protein belongs to the glutamate 5-kinase family.

The protein localises to the cytoplasm. The catalysed reaction is L-glutamate + ATP = L-glutamyl 5-phosphate + ADP. The protein operates within amino-acid biosynthesis; L-proline biosynthesis; L-glutamate 5-semialdehyde from L-glutamate: step 1/2. Its function is as follows. Catalyzes the transfer of a phosphate group to glutamate to form L-glutamate 5-phosphate. This is Glutamate 5-kinase from Listeria monocytogenes serotype 4b (strain CLIP80459).